Consider the following 123-residue polypeptide: Protein crumbs homolog 3 (123 aa).

The N-terminal stretch at 1 to 26 (MASPGLGLLLALGLPLLPARWGRAWG) is a signal peptide. Over 27 to 59 (QTLDPHVNENGTITPSAPGSGSNGALSQEAITA) the chain is Extracellular. N36 carries N-linked (GlcNAc...) asparagine glycosylation. A helical transmembrane segment spans residues 60 to 80 (IIVVFSLLAAVLLAVGLVLLL). Residues 81 to 120 (RKLREKRQTQGTYRPSSEEQFNHAAEARAPQDSKETVRGC) are Cytoplasmic-facing. The segment at 87-123 (RQTQGTYRPSSEEQFNHAAEARAPQDSKETVRGCLPI) is disordered. The segment covering 96 to 117 (SSEEQFNHAAEARAPQDSKETV) has biased composition (basic and acidic residues). A PDZ-binding motif is present at residues 119 to 123 (GCLPI).

In terms of assembly, component of a complex composed of CRB3, PALS1 and PATJ. Interacts (via C-terminus) with PALS1 (via PDZ domain). Interacts with PARD6A. Interacts (via intracellular domain) with EPB41L5. Interacts with WDR83.

It localises to the apical cell membrane. It is found in the cell junction. Its subcellular location is the tight junction. Its function is as follows. Involved in the establishment of cell polarity in mammalian epithelial cells. Regulates the morphogenesis of tight junctions. Involved in promoting phosphorylation and cytoplasmic retention of transcriptional coactivators YAP1 and WWTR1/TAZ which leads to suppression of TGFB1-dependent transcription of target genes such as CCN2/CTGF, SERPINE1/PAI1, SNAI1/SNAIL1 and SMAD7. This is Protein crumbs homolog 3 from Canis lupus familiaris (Dog).